The sequence spans 459 residues: Bifunctional protein GlmU (459 aa).

Positions 1 to 229 are pyrophosphorylase; it reads MSNFAIILAA…FDESLGVNDR (229 aa). Residues 8–11, K22, Q72, and 77–78 contribute to the UDP-N-acetyl-alpha-D-glucosamine site; these read LAAG and GT. Residue D102 coordinates Mg(2+). The UDP-N-acetyl-alpha-D-glucosamine site is built by G139, E154, N169, and N227. N227 contacts Mg(2+). The segment at 230 to 250 is linker; the sequence is VALATAESVMRRRINHKHMVN. The tract at residues 251–459 is N-acetyltransferase; sequence GVSFVNPEAT…TRLPHHPKNQ (209 aa). Positions 332 and 350 each coordinate UDP-N-acetyl-alpha-D-glucosamine. Residue H362 is the Proton acceptor of the active site. The UDP-N-acetyl-alpha-D-glucosamine site is built by Y365 and N376. Residues A379, 385-386, S404, A422, and R439 each bind acetyl-CoA; that span reads NY.

The protein in the N-terminal section; belongs to the N-acetylglucosamine-1-phosphate uridyltransferase family. It in the C-terminal section; belongs to the transferase hexapeptide repeat family. In terms of assembly, homotrimer. Mg(2+) is required as a cofactor.

The protein resides in the cytoplasm. The enzyme catalyses alpha-D-glucosamine 1-phosphate + acetyl-CoA = N-acetyl-alpha-D-glucosamine 1-phosphate + CoA + H(+). It carries out the reaction N-acetyl-alpha-D-glucosamine 1-phosphate + UTP + H(+) = UDP-N-acetyl-alpha-D-glucosamine + diphosphate. It functions in the pathway nucleotide-sugar biosynthesis; UDP-N-acetyl-alpha-D-glucosamine biosynthesis; N-acetyl-alpha-D-glucosamine 1-phosphate from alpha-D-glucosamine 6-phosphate (route II): step 2/2. It participates in nucleotide-sugar biosynthesis; UDP-N-acetyl-alpha-D-glucosamine biosynthesis; UDP-N-acetyl-alpha-D-glucosamine from N-acetyl-alpha-D-glucosamine 1-phosphate: step 1/1. Its pathway is bacterial outer membrane biogenesis; LPS lipid A biosynthesis. Functionally, catalyzes the last two sequential reactions in the de novo biosynthetic pathway for UDP-N-acetylglucosamine (UDP-GlcNAc). The C-terminal domain catalyzes the transfer of acetyl group from acetyl coenzyme A to glucosamine-1-phosphate (GlcN-1-P) to produce N-acetylglucosamine-1-phosphate (GlcNAc-1-P), which is converted into UDP-GlcNAc by the transfer of uridine 5-monophosphate (from uridine 5-triphosphate), a reaction catalyzed by the N-terminal domain. This chain is Bifunctional protein GlmU, found in Streptococcus pneumoniae (strain JJA).